A 117-amino-acid polypeptide reads, in one-letter code: UPF0122 protein Cthe_0771 (117 aa).

It belongs to the UPF0122 family.

In terms of biological role, might take part in the signal recognition particle (SRP) pathway. This is inferred from the conservation of its genetic proximity to ftsY/ffh. May be a regulatory protein. The protein is UPF0122 protein Cthe_0771 of Acetivibrio thermocellus (strain ATCC 27405 / DSM 1237 / JCM 9322 / NBRC 103400 / NCIMB 10682 / NRRL B-4536 / VPI 7372) (Clostridium thermocellum).